Consider the following 443-residue polypeptide: 23S rRNA (uracil(1939)-C(5))-methyltransferase RlmD (443 aa).

Positions 8-66 (KPLPAEPIAAHIESFAHDGKGIAHVDGRVVFVDGALPGEDVTFVYTEIKRDYAAGRVVE) constitute a TRAM domain. Residues cysteine 79, cysteine 85, cysteine 88, and cysteine 167 each coordinate [4Fe-4S] cluster. Glutamine 276, phenylalanine 305, asparagine 310, glutamate 326, aspartate 353, and aspartate 374 together coordinate S-adenosyl-L-methionine. Cysteine 400 functions as the Nucleophile in the catalytic mechanism.

Belongs to the class I-like SAM-binding methyltransferase superfamily. RNA M5U methyltransferase family. RlmD subfamily.

The catalysed reaction is uridine(1939) in 23S rRNA + S-adenosyl-L-methionine = 5-methyluridine(1939) in 23S rRNA + S-adenosyl-L-homocysteine + H(+). Catalyzes the formation of 5-methyl-uridine at position 1939 (m5U1939) in 23S rRNA. The protein is 23S rRNA (uracil(1939)-C(5))-methyltransferase RlmD of Methylococcus capsulatus (strain ATCC 33009 / NCIMB 11132 / Bath).